The sequence spans 209 residues: Thiamine-phosphate synthase (209 aa).

4-amino-2-methyl-5-(diphosphooxymethyl)pyrimidine-binding positions include 40–44 and Asn-72; that span reads QLREK. Positions 73 and 92 each coordinate Mg(2+). Ser-111 contributes to the 4-amino-2-methyl-5-(diphosphooxymethyl)pyrimidine binding site. Position 137–139 (137–139) interacts with 2-[(2R,5Z)-2-carboxy-4-methylthiazol-5(2H)-ylidene]ethyl phosphate; it reads TNS. Lys-140 lines the 4-amino-2-methyl-5-(diphosphooxymethyl)pyrimidine pocket. 2-[(2R,5Z)-2-carboxy-4-methylthiazol-5(2H)-ylidene]ethyl phosphate is bound by residues Gly-167 and 187–188; that span reads IS.

Belongs to the thiamine-phosphate synthase family. Mg(2+) is required as a cofactor.

It carries out the reaction 2-[(2R,5Z)-2-carboxy-4-methylthiazol-5(2H)-ylidene]ethyl phosphate + 4-amino-2-methyl-5-(diphosphooxymethyl)pyrimidine + 2 H(+) = thiamine phosphate + CO2 + diphosphate. The enzyme catalyses 2-(2-carboxy-4-methylthiazol-5-yl)ethyl phosphate + 4-amino-2-methyl-5-(diphosphooxymethyl)pyrimidine + 2 H(+) = thiamine phosphate + CO2 + diphosphate. The catalysed reaction is 4-methyl-5-(2-phosphooxyethyl)-thiazole + 4-amino-2-methyl-5-(diphosphooxymethyl)pyrimidine + H(+) = thiamine phosphate + diphosphate. The protein operates within cofactor biosynthesis; thiamine diphosphate biosynthesis; thiamine phosphate from 4-amino-2-methyl-5-diphosphomethylpyrimidine and 4-methyl-5-(2-phosphoethyl)-thiazole: step 1/1. Condenses 4-methyl-5-(beta-hydroxyethyl)thiazole monophosphate (THZ-P) and 2-methyl-4-amino-5-hydroxymethyl pyrimidine pyrophosphate (HMP-PP) to form thiamine monophosphate (TMP). The protein is Thiamine-phosphate synthase of Clostridium tetani (strain Massachusetts / E88).